Consider the following 62-residue polypeptide: Photosystem II reaction center protein Z (62 aa).

2 helical membrane passes run 8–28 (ALLA…VVFA) and 41–61 (FSGL…NSFV).

This sequence belongs to the PsbZ family. In terms of assembly, PSII is composed of 1 copy each of membrane proteins PsbA, PsbB, PsbC, PsbD, PsbE, PsbF, PsbH, PsbI, PsbJ, PsbK, PsbL, PsbM, PsbT, PsbY, PsbZ, Psb30/Ycf12, at least 3 peripheral proteins of the oxygen-evolving complex and a large number of cofactors. It forms dimeric complexes.

It localises to the plastid. It is found in the chloroplast thylakoid membrane. Controls the interaction of photosystem II (PSII) cores with the light-harvesting antenna, aiding in the dissipation of excitation energy within PSII. PSII is a light-driven water plastoquinone oxidoreductase, using light energy to abstract electrons from H(2)O, generating a proton gradient subsequently used for ATP formation. The polypeptide is Photosystem II reaction center protein Z (Chlamydomonas reinhardtii (Chlamydomonas smithii)).